Consider the following 271-residue polypeptide: Orotidine 5'-phosphate decarboxylase (271 aa).

K97 functions as the Proton donor in the catalytic mechanism.

Belongs to the OMP decarboxylase family. Type 2 subfamily.

The enzyme catalyses orotidine 5'-phosphate + H(+) = UMP + CO2. It functions in the pathway pyrimidine metabolism; UMP biosynthesis via de novo pathway; UMP from orotate: step 2/2. The polypeptide is Orotidine 5'-phosphate decarboxylase (Leptospira borgpetersenii serovar Hardjo-bovis (strain JB197)).